We begin with the raw amino-acid sequence, 131 residues long: Thioredoxin H4-1 (131 aa).

The Thioredoxin domain maps to 3-129; sequence SCVGKERSDE…LEKKVAALAD (127 aa). Active-site nucleophile residues include Cys55 and Cys58. Cys55 and Cys58 are joined by a disulfide.

It belongs to the thioredoxin family. Plant H-type subfamily.

The protein localises to the cytoplasm. Its function is as follows. Probable thiol-disulfide oxidoreductase that may be involved in the redox regulation of a number of cytosolic enzymes. This chain is Thioredoxin H4-1, found in Oryza sativa subsp. japonica (Rice).